Here is an 813-residue protein sequence, read N- to C-terminus: Leucine--tRNA ligase (813 aa).

The 'HIGH' region motif lies at 40–51 (SYPSGSKLHAGH). The 'KMSKS' region motif lies at 572–576 (KMSKS). Lysine 575 is a binding site for ATP.

It belongs to the class-I aminoacyl-tRNA synthetase family.

It localises to the cytoplasm. The enzyme catalyses tRNA(Leu) + L-leucine + ATP = L-leucyl-tRNA(Leu) + AMP + diphosphate. The sequence is that of Leucine--tRNA ligase from Clostridium botulinum (strain ATCC 19397 / Type A).